The following is a 37-amino-acid chain: Large ribosomal subunit protein bL36 (37 aa).

This sequence belongs to the bacterial ribosomal protein bL36 family.

This Mycobacteroides abscessus (strain ATCC 19977 / DSM 44196 / CCUG 20993 / CIP 104536 / JCM 13569 / NCTC 13031 / TMC 1543 / L948) (Mycobacterium abscessus) protein is Large ribosomal subunit protein bL36.